Consider the following 501-residue polypeptide: Solute carrier family 2, facilitated glucose transporter member 5 (501 aa).

An N-acetylmethionine modification is found at methionine 1. Residues 1-18 (MEQQDQSMKEGRLTLVLA) lie on the Cytoplasmic side of the membrane. A helical transmembrane segment spans residues 19 to 39 (LATLIAAFGSSFQYGYNVAAV). Tyrosine 32 provides a ligand contact to D-fructose. Over 40–68 (NSPALLMQQFYNETYYGRTGEFMEDFPLT) the chain is Extracellular. The N-linked (GlcNAc...) asparagine glycan is linked to asparagine 51. Residues 69–91 (LLWSVTVSMFPFGGFIGSLLVGP) form a helical membrane-spanning segment. Over 92–98 (LVNKFGR) the chain is Cytoplasmic. The chain crosses the membrane as a helical span at residues 99-119 (KGALLFNNIFSIVPAILMGCS). At 120-126 (RVATSFE) the chain is on the extracellular side. Residues 127–149 (LIIISRLLVGICAGVSSNVVPMY) form a helical membrane-spanning segment. The Cytoplasmic segment spans residues 150–161 (LGELAPKNLRGA). The chain crosses the membrane as a helical span at residues 162 to 182 (LGVVPQLFITVGILVAQIFGL). A D-fructose-binding site is contributed by glutamine 167. The Extracellular segment spans residues 183 to 192 (RNLLANVDGW). The chain crosses the membrane as a helical span at residues 193 to 213 (PILLGLTGVPAALQLLLLPFF). Over 214-277 (PESPRYLLIQ…LFRMRSLRWQ (64 aa)) the chain is Cytoplasmic. The chain crosses the membrane as a helical span at residues 278–298 (LLSIIVLMGGQQLSGVNAIYY). D-fructose-binding positions include glutamine 288 and 296–298 (IYY). Residues 299–313 (YADQIYLSAGVPEEH) are Extracellular-facing. Residues 314–334 (VQYVTAGTGAVNVVMTFCAVF) traverse the membrane as a helical segment. The Cytoplasmic portion of the chain corresponds to 335-342 (VVELLGRR). Residues 343 to 363 (LLLLLGFSICLIACCVLTAAL) form a helical membrane-spanning segment. Over 364-371 (ALQDTVSW) the chain is Extracellular. Residues 372–394 (MPYISIVCVISYVIGHALGPSPI) traverse the membrane as a helical segment. Histidine 387 contacts D-fructose. Over 395-412 (PALLITEIFLQSSRPSAF) the chain is Cytoplasmic. Residues 413-433 (MVGGSVHWLSNFTVGLIFPFI) traverse the membrane as a helical segment. 419–420 (HW) contacts D-fructose. Residues 434–439 (QEGLGP) are Extracellular-facing. Residues 440-460 (YSFIVFAVICLLTTIYIFLIV) traverse the membrane as a helical segment. Residues 461–501 (PETKAKTFIEINQIFTKMNKVSEVYPEKEELKELPPVTSEQ) are Cytoplasmic-facing.

In terms of tissue distribution, detected in skeletal muscle, and in jejunum brush border membrane and basolateral membrane (at protein level). Expressed in small intestine, and at much lower levels in kidney, skeletal muscle, and adipose tissue.

The protein localises to the apical cell membrane. It localises to the cell membrane. It is found in the sarcolemma. The catalysed reaction is D-fructose(out) = D-fructose(in). With respect to regulation, the uptake of 2-deoxyglucose is inhibited by cytochalasin B. Fructose transport is inhibited by the flavonoids epigallocatechin gallate and apigenin but not quercetin. Functions as a fructose transporter that has only low activity with other monosaccharides. Can mediate the uptake of 2-deoxyglucose, but with low efficiency. Essential for fructose uptake in the small intestine. Plays a role in the regulation of salt uptake and blood pressure in response to dietary fructose. Required for the development of high blood pressure in response to high dietary fructose intake. In Homo sapiens (Human), this protein is Solute carrier family 2, facilitated glucose transporter member 5.